We begin with the raw amino-acid sequence, 880 residues long: DNA double-strand break repair Rad50 ATPase (880 aa).

Residues Arg12, 32-38, and Gln138 contribute to the ATP site; that span reads NGSGKSS. 2 coiled-coil regions span residues 225–336 and 391–744; these read GELE…VIKE and GEVI…QALN. Residues 397–494 enclose the Zinc-hook domain; that stretch reads LESLEKERTE…NLRKLEIKLR (98 aa). Zn(2+) is bound by residues Cys442 and Cys445. ATP is bound at residue 789 to 794; it reads FLSGGE.

This sequence belongs to the SMC family. RAD50 subfamily. In terms of assembly, homodimer. Forms a heterotetramer composed of two Mre11 subunits and two Rad50 subunits. The cofactor is Zn(2+).

Part of the Rad50/Mre11 complex, which is involved in the early steps of DNA double-strand break (DSB) repair. The complex may facilitate opening of the processed DNA ends to aid in the recruitment of HerA and NurA. Rad50 controls the balance between DNA end bridging and DNA resection via ATP-dependent structural rearrangements of the Rad50/Mre11 complex. The sequence is that of DNA double-strand break repair Rad50 ATPase from Pyrococcus abyssi (strain GE5 / Orsay).